The primary structure comprises 351 residues: Probable cell division control protein 7 homolog 2 (351 aa).

Residues 21-341 (YTPIEKIGEG…ASDALSHPFF (321 aa)) form the Protein kinase domain. Residues 27–35 (IGEGSFSVV) and K50 each bind ATP. The active-site Proton acceptor is D137.

The protein belongs to the protein kinase superfamily. Ser/Thr protein kinase family. CDC7 subfamily. It depends on Mg(2+) as a cofactor.

The enzyme catalyses L-seryl-[protein] + ATP = O-phospho-L-seryl-[protein] + ADP + H(+). It catalyses the reaction L-threonyl-[protein] + ATP = O-phospho-L-threonyl-[protein] + ADP + H(+). Functionally, serine/threonine-protein kinase. Needed for the initiation of DNA synthesis during mitosis as well as for synaptonemal complex formation and commitment to recombination during meiosis. The chain is Probable cell division control protein 7 homolog 2 (CDC7-2) from Encephalitozoon cuniculi (strain GB-M1) (Microsporidian parasite).